The following is a 78-amino-acid chain: Translational regulator CsrA (78 aa).

This sequence belongs to the CsrA/RsmA family. As to quaternary structure, homodimer; the beta-strands of each monomer intercalate to form a hydrophobic core, while the alpha-helices form wings that extend away from the core.

The protein resides in the cytoplasm. Functionally, a translational regulator that binds mRNA to regulate translation initiation and/or mRNA stability. Usually binds in the 5'-UTR at or near the Shine-Dalgarno sequence preventing ribosome-binding, thus repressing translation. Its main target seems to be the major flagellin gene, while its function is anatagonized by FliW. The polypeptide is Translational regulator CsrA (Nitratidesulfovibrio vulgaris (strain ATCC 29579 / DSM 644 / CCUG 34227 / NCIMB 8303 / VKM B-1760 / Hildenborough) (Desulfovibrio vulgaris)).